A 532-amino-acid chain; its full sequence is Amidophosphoribosyltransferase 3, chloroplastic (532 aa).

The N-terminal 59 residues, 1 to 59, are a transit peptide targeting the chloroplast; it reads MAFSVEEISSILPNSLSANPRNVSQNTISPSFFKPSLKPYASKTLISLSCRRSLSPVFS. C77 acts as the Nucleophile in catalysis. Positions 77–296 constitute a Glutamine amidotransferase type-2 domain; the sequence is CGVVGIHGDP…PGEIVVVDRN (220 aa). Residues C313, C459, C511, and C514 each coordinate [4Fe-4S] cluster.

In the C-terminal section; belongs to the purine/pyrimidine phosphoribosyltransferase family. The cofactor is [4Fe-4S] cluster. Mg(2+) is required as a cofactor. Mostly expressed at low levels in leaves, and, to a lower extent, in cotyledons.

It localises to the plastid. It is found in the chloroplast stroma. It catalyses the reaction 5-phospho-beta-D-ribosylamine + L-glutamate + diphosphate = 5-phospho-alpha-D-ribose 1-diphosphate + L-glutamine + H2O. The protein operates within purine metabolism; IMP biosynthesis via de novo pathway; N(1)-(5-phospho-D-ribosyl)glycinamide from 5-phospho-alpha-D-ribose 1-diphosphate: step 1/2. Its activity is regulated as follows. Inhibited by the phenyltriazole acetic acid compound [5-(4-chlorophenyl)-1-isopropyl-1H-[1,2,4]triazol-3-yl]-acetic acid (DAS734), a bleaching herbicide. Repressed by AMP, ADP, ATP and GTP, and slightly by GMP. In terms of biological role, catalyzes the first committed step of 'de novo' purine biosynthesis from glutamine. The polypeptide is Amidophosphoribosyltransferase 3, chloroplastic (ASE3) (Arabidopsis thaliana (Mouse-ear cress)).